The chain runs to 265 residues: Glutamate racemase (265 aa).

Residues 12 to 13 and 44 to 45 contribute to the substrate site; these read DS and YG. Residue C75 is the Proton donor/acceptor of the active site. 76-77 serves as a coordination point for substrate; the sequence is NT. C186 functions as the Proton donor/acceptor in the catalytic mechanism. 187 to 188 is a binding site for substrate; the sequence is TH.

This sequence belongs to the aspartate/glutamate racemases family.

The catalysed reaction is L-glutamate = D-glutamate. The protein operates within cell wall biogenesis; peptidoglycan biosynthesis. In terms of biological role, provides the (R)-glutamate required for cell wall biosynthesis. The chain is Glutamate racemase from Pseudomonas putida (strain ATCC 47054 / DSM 6125 / CFBP 8728 / NCIMB 11950 / KT2440).